The sequence spans 495 residues: ATP synthase subunit alpha, chloroplastic (495 aa).

ATP is bound at residue 170-177; the sequence is GDRQTGKT.

It belongs to the ATPase alpha/beta chains family. In terms of assembly, F-type ATPases have 2 components, CF(1) - the catalytic core - and CF(0) - the membrane proton channel. CF(1) has five subunits: alpha(3), beta(3), gamma(1), delta(1), epsilon(1). CF(0) has four main subunits: a, b, b' and c.

It localises to the plastid. The protein localises to the chloroplast thylakoid membrane. It carries out the reaction ATP + H2O + 4 H(+)(in) = ADP + phosphate + 5 H(+)(out). Its function is as follows. Produces ATP from ADP in the presence of a proton gradient across the membrane. The alpha chain is a regulatory subunit. This Cyanidioschyzon merolae (strain NIES-3377 / 10D) (Unicellular red alga) protein is ATP synthase subunit alpha, chloroplastic.